The sequence spans 352 residues: Uroporphyrinogen decarboxylase (352 aa).

Substrate is bound by residues Arg26–Arg30, Phe45, Asp76, Tyr153, Ser208, and His323.

This sequence belongs to the uroporphyrinogen decarboxylase family. Homodimer.

The protein localises to the cytoplasm. The enzyme catalyses uroporphyrinogen III + 4 H(+) = coproporphyrinogen III + 4 CO2. The protein operates within porphyrin-containing compound metabolism; protoporphyrin-IX biosynthesis; coproporphyrinogen-III from 5-aminolevulinate: step 4/4. Functionally, catalyzes the decarboxylation of four acetate groups of uroporphyrinogen-III to yield coproporphyrinogen-III. The protein is Uroporphyrinogen decarboxylase of Prochlorococcus marinus (strain MIT 9313).